The chain runs to 4574 residues: E3 ubiquitin-protein ligase MYCBP2 (4574 aa).

Disordered stretches follow at residues 92 to 115 (RGKK…VKTR) and 599 to 620 (SASK…PYKP). RCC1 repeat units lie at residues 591-646 (DGSV…IVTK), 690-746 (SGEV…MMCQ), 943-993 (NGDV…VLLM), and 995-1051 (GQVF…LRID). Residues 611-620 (SRRQPKPYKP) show a composition bias toward basic residues. Cys1733 and Cys1850 are oxidised to a cystine. Disordered stretches follow at residues 1976-1998 (APPT…EQGL) and 2313-2332 (LQRL…LTFG). Composition is skewed to polar residues over residues 1981-1998 (NPNQ…EQGL) and 2317-2328 (PGTSSNSATGTD). A Filamin repeat occupies 2336 to 2417 (APKLEATYEP…IHVTIDGIEI (82 aa)). Disordered stretches follow at residues 2613 to 2824 (GFDY…PSPH), 2845 to 2922 (SNDE…KQAM), 3085 to 3116 (SPGS…KAEV), 3345 to 3365 (PGSN…TDSD), and 3505 to 3526 (FETE…EQEK). 2 stretches are compositionally biased toward basic and acidic residues: residues 2639–2663 (HRQE…KSKN) and 2678–2688 (DTGKLRSDSHS). Positions 2716–2729 (NPGSRSSSPKQKTF) are enriched in polar residues. The span at 2730-2745 (TSGRSSPSSTSSPRSS) shows a compositional bias: low complexity. Composition is skewed to basic and acidic residues over residues 2761–2772 (VHLDPPRERSKS), 2854–2864 (SELHNAEEGSS), and 2874–2883 (PVKEELESRS). Composition is skewed to basic residues over residues 2887-2900 (VSRK…RPKK) and 3102-3111 (KKTKKEKKKK). A compositionally biased stretch (basic and acidic residues) spans 3515 to 3526 (NKGNKENLEQEK). Positions 3617-3795 (FNISVQSGYE…SVAQQKNCEA (179 aa)) constitute a DOC domain. The disordered stretch occupies residues 3815-3841 (GDAEPTPEQEEKNLLSSPEGEDKAPSD). Zn(2+)-binding residues include Cys4324, Cys4327, Cys4342, His4344, His4347, Cys4350, Cys4371, Cys4374, Cys4440, and Cys4443. The segment at 4324 to 4375 (CMICFTEALSAAPAIQLDCSHVFHLQCTRRVLENRWLGPRITFGFMSCPICK) adopts an RING-type; atypical zinc-finger fold. Residues 4435–4572 (YAYYVCFKCK…LGCGVCRNAH (138 aa)) form a tandem cysteine domain region. Residue Cys4454 is part of the active site. Residues Cys4471, Cys4474, Cys4483, His4486, Cys4495, Cys4498, and Cys4499 each contribute to the Zn(2+) site. Cys4506 is an active-site residue. Residues Cys4513, Cys4516, Cys4534, Cys4548, His4554, Cys4565, and Cys4568 each coordinate Zn(2+).

It belongs to the RING-Cys relay (RCR) family. Widely expressed when the visual system begins developing. In the eye, expressed in all cells, including retinal ganglion cells, with no obvious gradient.

Its subcellular location is the nucleus. It localises to the cell projection. The protein localises to the axon. The protein resides in the cytoplasm. It is found in the cytoskeleton. The catalysed reaction is [E2 ubiquitin-conjugating enzyme]-S-ubiquitinyl-L-cysteine + [acceptor protein]-L-threonine = [E2 ubiquitin-conjugating enzyme]-L-cysteine + [acceptor protein]-3-O-ubiquitinyl-L-threonine.. The protein operates within protein modification; protein ubiquitination. Its function is as follows. Atypical E3 ubiquitin-protein ligase which specifically mediates ubiquitination of threonine and serine residues on target proteins, instead of ubiquitinating lysine residues. Shows esterification activity towards both threonine and serine, with a preference for threonine, and acts via two essential catalytic cysteine residues that relay ubiquitin to its substrate via thioester intermediates. Interacts with the E2 enzymes UBE2D1, UBE2D3, UBE2E1 and UBE2L3. Plays a key role in neural development, probably by mediating ubiquitination of threonine residues on target proteins. Involved in different processes such as regulation of neurite outgrowth, synaptic growth, synaptogenesis and axon degeneration. Required in the visual system for correct fasciculation, targeting and mapping of retinal axons. Acts as a regulator of pteridine synthesis. May play a role in the regulation of the circadian clock gene expression. This Danio rerio (Zebrafish) protein is E3 ubiquitin-protein ligase MYCBP2.